Here is a 342-residue protein sequence, read N- to C-terminus: Dihydroorotate dehydrogenase (quinone) (342 aa).

FMN contacts are provided by residues 61–65 and Thr-85; that span reads AGLDK. Lys-65 serves as a coordination point for substrate. 110–114 is a binding site for substrate; it reads NRMGF. FMN is bound by residues Asn-138 and Asn-171. Asn-171 contacts substrate. Ser-174 functions as the Nucleophile in the catalytic mechanism. Asn-176 is a binding site for substrate. The FMN site is built by Lys-216 and Thr-244. 245 to 246 contributes to the substrate binding site; sequence NT. FMN contacts are provided by residues Gly-267, Gly-296, and 317–318; that span reads YS.

This sequence belongs to the dihydroorotate dehydrogenase family. Type 2 subfamily. Monomer. FMN is required as a cofactor.

The protein resides in the cell membrane. The catalysed reaction is (S)-dihydroorotate + a quinone = orotate + a quinol. It functions in the pathway pyrimidine metabolism; UMP biosynthesis via de novo pathway; orotate from (S)-dihydroorotate (quinone route): step 1/1. Its function is as follows. Catalyzes the conversion of dihydroorotate to orotate with quinone as electron acceptor. The protein is Dihydroorotate dehydrogenase (quinone) of Cellvibrio japonicus (strain Ueda107) (Pseudomonas fluorescens subsp. cellulosa).